A 209-amino-acid polypeptide reads, in one-letter code: Mitochondrial import inner membrane translocase subunit Tim23 (209 aa).

The next 3 membrane-spanning stretches (helical) occupy residues 73–93 (FELAFFTIGGCCMTGAAFGAM), 125–145 (ALWANTLGSLALLYSAFGVII), and 181–197 (GLAGLTLTSLYALYNNW).

This sequence belongs to the Tim17/Tim22/Tim23 family. In terms of assembly, component of the TIM23 complex at least composed of TIMM23, TIMM17 (TIMM17A or TIMM17B) and TIMM50; within this complex, directly interacts with TIMM50. The complex interacts with the TIMM44 component of the PAM complex and with DNAJC15. Upon mitochondrial depolarization, interacts with PINK1; the interaction is required for PINK1 accumulation at the outer mitochondrial membrane, kinase activation by autophosphorylation and PRKN recruitement to mitochondria.

Its subcellular location is the mitochondrion inner membrane. Its function is as follows. Essential component of the TIM23 complex, a complex that mediates the translocation of transit peptide-containing proteins across the mitochondrial inner membrane. Has a role in the activation of stress-induced mitophagy by protecting PINK1 from OMA1-mediated degradation and facilitating its accumulation at the outer mitochondrial membrane in response to depolarization. The sequence is that of Mitochondrial import inner membrane translocase subunit Tim23 (Timm23) from Mus musculus (Mouse).